An 874-amino-acid chain; its full sequence is Bifunctional uridylyltransferase/uridylyl-removing enzyme (874 aa).

Residues 1-332 (MTLQSPLTFR…NGGASEDAEI (332 aa)) are uridylyltransferase. The interval 333–692 (IDEDFQRRGA…ISKKATRGGT (360 aa)) is uridylyl-removing. The HD domain occupies 451 to 573 (VDEHSIRLLK…VRDEEYLEYL (123 aa)). ACT domains are found at residues 693–777 (EVFV…RTPN) and 800–874 (LMEF…SVSA).

The protein belongs to the GlnD family. Mg(2+) is required as a cofactor.

The catalysed reaction is [protein-PII]-L-tyrosine + UTP = [protein-PII]-uridylyl-L-tyrosine + diphosphate. It catalyses the reaction [protein-PII]-uridylyl-L-tyrosine + H2O = [protein-PII]-L-tyrosine + UMP + H(+). Uridylyltransferase (UTase) activity is inhibited by glutamine, while glutamine activates uridylyl-removing (UR) activity. Modifies, by uridylylation and deuridylylation, the PII regulatory proteins (GlnB and homologs), in response to the nitrogen status of the cell that GlnD senses through the glutamine level. Under low glutamine levels, catalyzes the conversion of the PII proteins and UTP to PII-UMP and PPi, while under higher glutamine levels, GlnD hydrolyzes PII-UMP to PII and UMP (deuridylylation). Thus, controls uridylylation state and activity of the PII proteins, and plays an important role in the regulation of nitrogen assimilation and metabolism. This chain is Bifunctional uridylyltransferase/uridylyl-removing enzyme, found in Vibrio campbellii (strain ATCC BAA-1116).